Reading from the N-terminus, the 463-residue chain is MIPVTSFKGRKVALFGLGGSGLATAQALVSGGADVVAWDDNPDSVAKAAAAGIATADLRGADWHAFAAFVLSPGVPLTHPKPHWSVDLAHQAGVEIIGDVELFVRERRKHAPDCPFIAITGTNGKSTTTALIAHILRTSGRDTQLGGNIGTAVLTLDPPKAGRFYVVECSSYQIDLAPTLDPTAGILLNLTPDHLDRHGTMQHYADIKERLVAGSGTAVVGVDDSLSSLIADRVERAGTKVVRISRRHPLAEGIYAEGSALMRAQDGASSLFTDLAGIQTLRGGHNAQNAAAAIAACLAVGISGKDIVDGLRSFPGLKHRMQPVAKKGEVVFVNDSKATNAEAAAPALSSYDRIYWIAGGLPKEGGITSLAPFFPKIVKAYLIGEAAPSFAATLGEAVPYEISGTLEKAVAHAAADAARDSQGPAAVMLSPACASFDQYKNFEVRGDAFVGHVAALEGVSMLI.

121-127 (GTNGKST) contributes to the ATP binding site.

It belongs to the MurCDEF family.

The protein resides in the cytoplasm. It carries out the reaction UDP-N-acetyl-alpha-D-muramoyl-L-alanine + D-glutamate + ATP = UDP-N-acetyl-alpha-D-muramoyl-L-alanyl-D-glutamate + ADP + phosphate + H(+). Its pathway is cell wall biogenesis; peptidoglycan biosynthesis. Functionally, cell wall formation. Catalyzes the addition of glutamate to the nucleotide precursor UDP-N-acetylmuramoyl-L-alanine (UMA). The polypeptide is UDP-N-acetylmuramoylalanine--D-glutamate ligase (murD) (Rhizobium meliloti (strain 1021) (Ensifer meliloti)).